Reading from the N-terminus, the 209-residue chain is LexA repressor (209 aa).

A DNA-binding region (H-T-H motif) is located at residues 30–50; it reads RVEIAREIGFKSPNAAEEHLK. Catalysis depends on for autocatalytic cleavage activity residues serine 126 and lysine 163.

It belongs to the peptidase S24 family. Homodimer.

The catalysed reaction is Hydrolysis of Ala-|-Gly bond in repressor LexA.. Represses a number of genes involved in the response to DNA damage (SOS response), including recA and lexA. In the presence of single-stranded DNA, RecA interacts with LexA causing an autocatalytic cleavage which disrupts the DNA-binding part of LexA, leading to derepression of the SOS regulon and eventually DNA repair. This Glaesserella parasuis serovar 5 (strain SH0165) (Haemophilus parasuis) protein is LexA repressor.